Consider the following 63-residue polypeptide: DNA-directed RNA polymerase 7 kDa subunit (63 aa).

This sequence belongs to the poxviridae DNA-directed RNA polymerase 7 kDa subunit family. As to quaternary structure, the DNA-dependent RNA polymerase used for intermediate and late genes expression consists of eight subunits 147 kDa, 133 kDa, 35 kDa, 30 kDa, 22 kDa, 19 kDa, 18 kDa and 7 kDa totalling more than 500 kDa in mass. The same holoenzyme, with the addition of the transcription-specificity factor RAP94, is used for early gene expression.

The protein resides in the virion. It carries out the reaction RNA(n) + a ribonucleoside 5'-triphosphate = RNA(n+1) + diphosphate. In terms of biological role, part of the DNA-dependent RNA polymerase which catalyzes the transcription of viral DNA into RNA using the four ribonucleoside triphosphates as substrates. Responsible for the transcription of early, intermediate and late genes. DNA-dependent RNA polymerase associates with the early transcription factor (ETF) thereby allowing the early genes transcription. Late transcription, and probably also intermediate transcription, require newly synthesized RNA polymerase. This Myxoma virus (strain Lausanne) (MYXV) protein is DNA-directed RNA polymerase 7 kDa subunit (RPO7).